The chain runs to 175 residues: NADH-quinone oxidoreductase subunit B (175 aa).

Residues C49, C50, C115, and C145 each coordinate [4Fe-4S] cluster.

The protein belongs to the complex I 20 kDa subunit family. NDH-1 is composed of 14 different subunits. Subunits NuoB, C, D, E, F, and G constitute the peripheral sector of the complex. The cofactor is [4Fe-4S] cluster.

It is found in the cell membrane. It catalyses the reaction a quinone + NADH + 5 H(+)(in) = a quinol + NAD(+) + 4 H(+)(out). Functionally, NDH-1 shuttles electrons from NADH, via FMN and iron-sulfur (Fe-S) centers, to quinones in the respiratory chain. The immediate electron acceptor for the enzyme in this species is believed to be a menaquinone. Couples the redox reaction to proton translocation (for every two electrons transferred, four hydrogen ions are translocated across the cytoplasmic membrane), and thus conserves the redox energy in a proton gradient. In Heliobacterium modesticaldum (strain ATCC 51547 / Ice1), this protein is NADH-quinone oxidoreductase subunit B.